Consider the following 2238-residue polypeptide: Golgin subfamily A member 4 (2238 aa).

Residues 1-90 (MFKKLKQKIS…QTFAQKLQLR (90 aa)) are disordered. Ser10 carries the phosphoserine modification. Low complexity predominate over residues 12 to 41 (EQQQLQQALAPAQASSSSSTPTRTRSRTSS). At Thr39 the chain carries Phosphothreonine. Ser41 is subject to Phosphoserine. 2 stretches are compositionally biased toward polar residues: residues 52–62 (NRENASTQATK) and 73–85 (SPSQ…TFAQ). Phosphoserine is present on residues Ser93 and Ser100. Disordered regions lie at residues 132-154 (AAAF…NSDG), 1695-1744 (LKER…SQDC), and 1770-1789 (LEQG…HRAL). The interaction with MACF1 stretch occupies residues 154–224 (GLSREQLLQR…EELQMDQQAK (71 aa)). Positions 156–2161 (SREQLLQRLR…RYEKNACAAT (2006 aa)) form a coiled coil. Positions 1695–1711 (LKEREKQVHSLEDKLKN) are enriched in basic and acidic residues. In terms of domain architecture, GRIP spans 2178-2225 (LFGEPTEFEYLRKVMFEYMMGRETKTMAKVITTVLKFPDDQAQKILER).

In terms of assembly, homodimer. Interacts with GTP-bound ARL1 and ARL3. Interacts with MACF1. Directly interacts with TBC1D23. Interacts with FAM91A1; this interaction may be mediated by TBC1D23. Ubiquitous. Highly expressed in oligodendrocyte precursors, particularly at a stage just prior to myelination.

It localises to the cytoplasm. It is found in the golgi apparatus membrane. The protein localises to the golgi apparatus. Its subcellular location is the trans-Golgi network membrane. Functionally, involved in vesicular trafficking at the Golgi apparatus level. May play a role in delivery of transport vesicles containing GPI-linked proteins from the trans-Golgi network through its interaction with MACF1. Involved in endosome-to-Golgi trafficking. The polypeptide is Golgin subfamily A member 4 (Golga4) (Mus musculus (Mouse)).